A 365-amino-acid polypeptide reads, in one-letter code: Protein RecA (365 aa).

77 to 84 (GPESSGKT) is a binding site for ATP.

The protein belongs to the RecA family.

It localises to the cytoplasm. Can catalyze the hydrolysis of ATP in the presence of single-stranded DNA, the ATP-dependent uptake of single-stranded DNA by duplex DNA, and the ATP-dependent hybridization of homologous single-stranded DNAs. It interacts with LexA causing its activation and leading to its autocatalytic cleavage. This Mesorhizobium japonicum (strain LMG 29417 / CECT 9101 / MAFF 303099) (Mesorhizobium loti (strain MAFF 303099)) protein is Protein RecA.